The following is a 114-amino-acid chain: Flagellar transcriptional regulator FlhD (114 aa).

The protein belongs to the FlhD family. As to quaternary structure, homodimer; disulfide-linked. Forms a heterohexamer composed of two FlhC and four FlhD subunits. Each FlhC binds a FlhD dimer, forming a heterotrimer, and a hexamer assembles by dimerization of two heterotrimers.

The protein localises to the cytoplasm. Its function is as follows. Functions in complex with FlhC as a master transcriptional regulator that regulates transcription of several flagellar and non-flagellar operons by binding to their promoter region. Activates expression of class 2 flagellar genes, including fliA, which is a flagellum-specific sigma factor that turns on the class 3 genes. Also regulates genes whose products function in a variety of physiological pathways. The chain is Flagellar transcriptional regulator FlhD from Wigglesworthia glossinidia brevipalpis.